The chain runs to 281 residues: Transmembrane protein 163 (281 aa).

At 1–80 (MEPLDTELCY…HEAQNYRKKA (80 aa)) the chain is on the cytoplasmic side. Positions 16-44 (IVQPSCNGQTPPGHRTLSPTQQMDHEQQM) are disordered. The helical transmembrane segment at 81–101 (LWVSWLSIAITLILAIAAFTV) threads the bilayer. The Extracellular portion of the chain corresponds to 102–108 (SVMRYSA). The helical transmembrane segment at 109-129 (SSFGFALDAVLDVLSSAIVLW) threads the bilayer. Residues 130 to 145 (RYSNAAAVHSAHREYM) lie on the Cytoplasmic side of the membrane. Residues 146–166 (ACCILGVIFLLSSICIVSKAI) form a helical membrane-spanning segment. Over 167 to 179 (HDLSIRVMPEVDG) the chain is Extracellular. Residues 180–200 (FLFSVSILSGILCSLLAAIKF) traverse the membrane as a helical segment. The Cytoplasmic portion of the chain corresponds to 201–209 (MLGKVLTSR). The chain crosses the membrane as a helical span at residues 210 to 230 (ALITDGFNSLVGGIMGFSILL). Topologically, residues 231–240 (SAEVYKHNSK) are extracellular. The chain crosses the membrane as a helical span at residues 241–261 (VWYLDGSVGILIGLIIMSYGI). At 262 to 281 (KLLMDMVPRVRQTRHYEMFE) the chain is on the cytoplasmic side.

This sequence belongs to the TMEM163 family.

The protein resides in the cytoplasmic vesicle. The protein localises to the secretory vesicle. Its subcellular location is the synaptic vesicle membrane. It localises to the early endosome membrane. In terms of biological role, may bind zinc and other divalent cations and recruit them to vesicular organelles. The sequence is that of Transmembrane protein 163 (tmem163) from Xenopus laevis (African clawed frog).